Here is a 592-residue protein sequence, read N- to C-terminus: Inactive metallocarboxypeptidase ecm14 (592 aa).

The signal sequence occupies residues 1 to 22 (MYRQDHVFVVLCAVLLAGQVTA). A propeptide spanning residues 23–175 (VPAGTGINPH…AIYESRYPTR (153 aa)) is cleaved from the precursor. The Peptidase M14 domain occupies 203–524 (HYQPFNVILQ…NSVLVLGHFL (322 aa)). Zn(2+) is bound by residues histidine 267 and glutamate 270. Residues 267–270 (HARE), arginine 325, and 342–343 (DR) each bind substrate. The cysteines at positions 336 and 359 are disulfide-linked. Asparagine 383 is a glycosylation site (N-linked (GlcNAc...) asparagine). Residue histidine 399 participates in Zn(2+) binding. 400–401 (SY) lines the substrate pocket. Asparagine 548 carries N-linked (GlcNAc...) asparagine glycosylation.

Belongs to the peptidase M14 family. Requires Zn(2+) as cofactor.

It localises to the vacuole. Its subcellular location is the secreted. In terms of biological role, inactive carboxypeptidase that may play a role in cell wall organization and biogenesis. The sequence is that of Inactive metallocarboxypeptidase ecm14 (ecm14) from Talaromyces stipitatus (strain ATCC 10500 / CBS 375.48 / QM 6759 / NRRL 1006) (Penicillium stipitatum).